The primary structure comprises 119 residues: Developmental pluripotency-associated protein 5B/5C (119 aa).

Positions 24 to 86 (PEVFQVQSLV…SIKVRAKWLL (63 aa)) constitute a KH; atypical domain.

This sequence belongs to the KHDC1 family.

The protein resides in the cytoplasm. Its function is as follows. Involved in the maintenance of embryonic stem (ES) cell pluripotency. Dispensable for self-renewal of pluripotent ES cells and establishment of germ cells. Associates with specific target mRNAs. The polypeptide is Developmental pluripotency-associated protein 5B/5C (Mus musculus (Mouse)).